A 551-amino-acid chain; its full sequence is Monocarboxylic acid transporter (551 aa).

13 helical membrane passes run 18–38, 63–83, 90–110, 144–164, 171–191, 203–223, 267–287, 307–327, 355–375, 411–431, 432–452, 463–483, and 503–523; these read NPIL…TVVL, GLAI…VGAI, GFLY…LVAE, VTLF…SVLL, WQAV…LLGG, AVLL…KVSG, LDFI…PHVL, IVLI…AAAL, IFMA…VAGL, VVIG…NVAF, LVAL…LYSL, VAAI…SPAV, and NPGL…TLVG.

Belongs to the sodium:solute symporter (SSF) (TC 2.A.21) family.

It localises to the cell membrane. In terms of biological role, acts as a secondary carrier for acetate, propionate and pyruvate. Has high affinity for acetate and propionate and lower affinity for pyruvate. Driven by the electrochemical proton potential. The polypeptide is Monocarboxylic acid transporter (Corynebacterium glutamicum (strain ATCC 13032 / DSM 20300 / JCM 1318 / BCRC 11384 / CCUG 27702 / LMG 3730 / NBRC 12168 / NCIMB 10025 / NRRL B-2784 / 534)).